A 116-amino-acid chain; its full sequence is NADH-ubiquinone oxidoreductase chain 3 (116 aa).

3 consecutive transmembrane segments (helical) span residues 4–24, 56–76, and 88–108; these read LIIT…IAFW, FFLI…LLPL, and TLIL…YEWI.

This sequence belongs to the complex I subunit 3 family. In terms of assembly, core subunit of respiratory chain NADH dehydrogenase (Complex I) which is composed of 45 different subunits. Interacts with TMEM186. Interacts with TMEM242.

The protein localises to the mitochondrion inner membrane. It carries out the reaction a ubiquinone + NADH + 5 H(+)(in) = a ubiquinol + NAD(+) + 4 H(+)(out). Core subunit of the mitochondrial membrane respiratory chain NADH dehydrogenase (Complex I) which catalyzes electron transfer from NADH through the respiratory chain, using ubiquinone as an electron acceptor. Essential for the catalytic activity of complex I. The polypeptide is NADH-ubiquinone oxidoreductase chain 3 (Osphranter robustus (Wallaroo)).